The sequence spans 376 residues: Partitioning defective 6 homolog gamma (376 aa).

The PB1 domain maps to 18 to 98; the sequence is AVEVKSKFGA…PLLRVFIQKR (81 aa). Residues 127 to 254 are interaction with PARD3 and CDC42; sequence RRRAHLDIGL…VTVKPANQRN (128 aa). Positions 134 to 151 constitute a Pseudo-CRIB domain; it reads IGLPRDFRPVSSIIDVDL. Residues 158–251 enclose the PDZ domain; it reads RVRLHRHGCE…NLIVTVKPAN (94 aa). The disordered stretch occupies residues 356–376; that stretch reads PRHSLALPPGGVEEHGPAVTL. Basic and acidic residues predominate over residues 367–376; that stretch reads VEEHGPAVTL.

The protein belongs to the PAR6 family. As to quaternary structure, interacts with PARD3. Interacts with GTP-bound forms of CDC42, RHOQ/TC10 and RAC1. Interacts with the N-terminal part of PRKCI and PRKCZ. Widely expressed, with a higher expression in fetal and adult kidney.

The protein resides in the cytoplasm. It is found in the cell membrane. The protein localises to the cell junction. It localises to the tight junction. Functionally, adapter protein involved in asymmetrical cell division and cell polarization processes. May play a role in the formation of epithelial tight junctions. The PARD6-PARD3 complex links GTP-bound Rho small GTPases to atypical protein kinase C proteins. The polypeptide is Partitioning defective 6 homolog gamma (PARD6G) (Homo sapiens (Human)).